The following is a 394-amino-acid chain: Putative 8-amino-7-oxononanoate synthase (394 aa).

Arg23 contributes to the substrate binding site. 110-111 (GY) provides a ligand contact to pyridoxal 5'-phosphate. Position 135 (His135) interacts with substrate. Pyridoxal 5'-phosphate-binding positions include Ser182, 207–210 (DEAH), and 238–241 (TFSK). Lys241 is modified (N6-(pyridoxal phosphate)lysine). Thr355 lines the substrate pocket.

It belongs to the class-II pyridoxal-phosphate-dependent aminotransferase family. BioF subfamily. Homodimer. The cofactor is pyridoxal 5'-phosphate.

The catalysed reaction is 6-carboxyhexanoyl-[ACP] + L-alanine + H(+) = (8S)-8-amino-7-oxononanoate + holo-[ACP] + CO2. The protein operates within cofactor biosynthesis; biotin biosynthesis. Functionally, catalyzes the decarboxylative condensation of pimeloyl-[acyl-carrier protein] and L-alanine to produce 8-amino-7-oxononanoate (AON), [acyl-carrier protein], and carbon dioxide. This is Putative 8-amino-7-oxononanoate synthase (bioF) from Bacillus cereus (strain Q1).